The sequence spans 472 residues: GTPase Der (472 aa).

EngA-type G domains are found at residues 3–166 (AVIA…PPAE) and 178–351 (IPVA…AAAH). Residues 9–16 (GRPNVGKS), 56–60 (DTGGM), 118–121 (NKTD), 184–191 (GRPNVGKS), 231–235 (DTAGV), and 296–299 (NKWD) each bind GTP. The 85-residue stretch at 352-436 (RDLATPELND…PVRIECRASD (85 aa)) folds into the KH-like domain. Residues 434-472 (ASDNPFADKPNQLTERQRRRRQRVIHHAKKREKKRKRRR) are disordered. The segment covering 450–472 (QRRRRQRVIHHAKKREKKRKRRR) has biased composition (basic residues).

The protein belongs to the TRAFAC class TrmE-Era-EngA-EngB-Septin-like GTPase superfamily. EngA (Der) GTPase family. In terms of assembly, associates with the 50S ribosomal subunit.

GTPase that plays an essential role in the late steps of ribosome biogenesis. The protein is GTPase Der of Halorhodospira halophila (strain DSM 244 / SL1) (Ectothiorhodospira halophila (strain DSM 244 / SL1)).